Consider the following 297-residue polypeptide: Acetylglutamate kinase (297 aa).

Substrate contacts are provided by residues 72 to 73 (GG), Arg-94, and Asn-193.

The protein belongs to the acetylglutamate kinase family. ArgB subfamily.

It localises to the cytoplasm. The catalysed reaction is N-acetyl-L-glutamate + ATP = N-acetyl-L-glutamyl 5-phosphate + ADP. It participates in amino-acid biosynthesis; L-arginine biosynthesis; N(2)-acetyl-L-ornithine from L-glutamate: step 2/4. Its function is as follows. Catalyzes the ATP-dependent phosphorylation of N-acetyl-L-glutamate. In Mycobacterium leprae (strain TN), this protein is Acetylglutamate kinase.